The chain runs to 115 residues: Con-Ins G1b (115 aa).

Residues Met1 to Gly24 form the signal peptide. A propeptide spanning residues Asn25–Arg29 is cleaved from the precursor. Position 34 is a 4-hydroxyproline; partial (Pro34). Cystine bridges form between Cys38/Cys101, Cys50/Cys114, and Cys100/Cys105. Glu41 is modified (4-carboxyglutamate). Positions Arg52–Arg94 are cleaved as a propeptide — c peptide. Position 98 is a 4-carboxyglutamate (Glu98). Position 104 is a 4-hydroxyproline; partial (Pro104). The residue at position 109 (Glu109) is a 4-carboxyglutamate; partial. Cys114 is subject to Cysteine amide.

The protein belongs to the insulin family. In terms of assembly, heterodimer of A and B chains; disulfide-linked. Expressed by the venom gland.

The protein localises to the secreted. Functionally, this venom insulin, from a fish-hunting cone snail, facilitates prey capture by rapidly inducing hypoglycemic shock. It is one of the smallest known insulin found in nature and lacks the C-terminal segment of the B chain that, in human insulin, mediates engagement of the insulin receptor (INSR) and assembly of the hormone's hexameric storage form. Despite lacking this segment, it both binds and activates human insulin receptor (long isoform (HIR-B) of INSR) with only a 10-fold lower potency. In vivo, intraperitoneal injection of this peptide into zebrafish lowers blood glucose with the same potency than human insulin. In addition, when applied to water, this peptide reduces overall locomotor activity of zebrafish larvae, observed as a significant decrease in the percentage of time spent swimming and movement frequency. The chain is Con-Ins G1b from Conus geographus (Geography cone).